A 109-amino-acid chain; its full sequence is UPF0122 protein ABC2295 (109 aa).

Belongs to the UPF0122 family.

Functionally, might take part in the signal recognition particle (SRP) pathway. This is inferred from the conservation of its genetic proximity to ftsY/ffh. May be a regulatory protein. In Shouchella clausii (strain KSM-K16) (Alkalihalobacillus clausii), this protein is UPF0122 protein ABC2295.